A 308-amino-acid chain; its full sequence is Ribonuclease H2 subunit B (308 aa).

Residue A2 is modified to N-acetylalanine. K292 bears the N6-acetyllysine mark. S293 carries the post-translational modification Phosphoserine.

The protein belongs to the RNase H2 subunit B family. As to quaternary structure, the RNase H2 complex is a heterotrimer composed of the catalytic subunit RNASEH2A and the non-catalytic subunits RNASEH2B and RNASEH2C.

Its subcellular location is the nucleus. In terms of biological role, non catalytic subunit of RNase H2, an endonuclease that specifically degrades the RNA of RNA:DNA hybrids. Participates in DNA replication, possibly by mediating the removal of lagging-strand Okazaki fragment RNA primers during DNA replication. Mediates the excision of single ribonucleotides from DNA:RNA duplexes. The sequence is that of Ribonuclease H2 subunit B (Rnaseh2b) from Mus musculus (Mouse).